The following is a 471-amino-acid chain: Pachytene checkpoint protein 2 homolog (471 aa).

Residue 213–220 (GPPGTGKT) participates in ATP binding.

This sequence belongs to the AAA ATPase family. PCH2 subfamily.

Functionally, plays a key role in chromosome recombination during meiosis. This is Pachytene checkpoint protein 2 homolog from Oryza sativa subsp. indica (Rice).